Consider the following 1158-residue polypeptide: Serine/threonine/tyrosine-interacting-like protein 2 (1158 aa).

Disordered regions lie at residues 1-21 (MATRKDTEEEQVVPSEEDEAN), 280-303 (EEREEDYGREGGSAEAEEGEGTGS), 315-337 (EEEDDSASHLSGSSLGKATQASK), 360-392 (LLSDKVPQDGGGWRSASSGQGGEELEDEDVERI), 407-444 (GYRRWGREEEKEEESDAGSSVGRRRRTLSESSAWESVS), 492-527 (SRRYHAKSKREEAADRSSEAGSRVREDDEDSVGSEA), 559-582 (KDLGAGDSSGEPGAEEAVGEKNPS), 597-622 (QKKVGSENKEEVVELSKGEDSALAKK), 873-915 (KVKE…CSSL), and 940-1135 (SGLR…MDDE). Acidic residues predominate over residues 8–19 (EEEQVVPSEEDE). In terms of domain architecture, Tyrosine-protein phosphatase spans 132-280 (NEVDEVWPNV…LRELNEKLME (149 aa)). The segment covering 322 to 337 (SHLSGSSLGKATQASK) has biased composition (polar residues). Serine 377 is subject to Phosphoserine. A Phosphothreonine modification is found at threonine 433. The segment covering 435 to 444 (SESSAWESVS) has biased composition (low complexity). Positions 500 to 517 (KREEAADRSSEAGSRVRE) are enriched in basic and acidic residues. The residue at position 509 (serine 509) is a Phosphoserine. Residues 600-619 (VGSENKEEVVELSKGEDSAL) show a composition bias toward basic and acidic residues. Residues 877–890 (DEDDGVGDGDEDTD) show a composition bias toward acidic residues. Polar residues-rich tracts occupy residues 897–914 (RYSSRSNSQKPETDTCSS) and 952–966 (SDWSGSSRGKYTRSS). Residues 974–983 (KSSSYKFSKS) show a composition bias toward low complexity. Serine 985 is modified (phosphoserine). The span at 990–999 (TSSYHEANGN) shows a compositional bias: polar residues. The segment covering 1000–1012 (SVRSTSRFSSSST) has biased composition (low complexity). Phosphoserine is present on serine 1036. 3 stretches are compositionally biased toward basic and acidic residues: residues 1044 to 1056 (RTPESSEREESPE), 1064 to 1079 (RSRDWEDVEESSKSDF), and 1094 to 1111 (RSEEEGEKERTENREEGR). Positions 1126–1135 (REEEEEMDDE) are enriched in acidic residues.

Belongs to the protein-tyrosine phosphatase family. Non-receptor class dual specificity subfamily.

It is found in the cytoplasm. The protein localises to the myofibril. Its subcellular location is the sarcomere. May be required for myofiber maturation. The polypeptide is Serine/threonine/tyrosine-interacting-like protein 2 (Homo sapiens (Human)).